Reading from the N-terminus, the 398-residue chain is Na(+)/H(+) antiporter NhaA (398 aa).

The next 11 membrane-spanning stretches (helical) occupy residues 14–34 (AAGV…NWSV), 60–80 (LLLW…GLEV), 96–116 (MLPL…FLLF), 125–145 (VGWA…LTLL), 155–175 (VFLL…IALF), 179–199 (QIFW…AYLN), 214–234 (IVLW…GVIV), 263–283 (FLII…GIVL), 292–312 (LGIA…LSWL), 330–350 (IVAV…ITLL), and 362–382 (YAKL…YLAL).

It belongs to the NhaA Na(+)/H(+) (TC 2.A.33) antiporter family.

The protein localises to the cell inner membrane. It catalyses the reaction Na(+)(in) + 2 H(+)(out) = Na(+)(out) + 2 H(+)(in). In terms of biological role, na(+)/H(+) antiporter that extrudes sodium in exchange for external protons. This Pectobacterium carotovorum subsp. carotovorum (strain PC1) protein is Na(+)/H(+) antiporter NhaA.